Reading from the N-terminus, the 424-residue chain is Zinc finger and BTB domain-containing protein 6 (424 aa).

Positions 33-97 (CDVSIYINDT…CYTGALEVKR (65 aa)) constitute a BTB domain. Serine 202 carries the post-translational modification Phosphoserine. 4 consecutive C2H2-type zinc fingers follow at residues 301–323 (HQCPRCPRGFLHVENYLRHLKMH), 326–348 (FLCLQCGKTFTQKKNLNRHIRGH), 354–376 (FQCTVCLKTFTAKSTLQDHLNIH), and 382–405 (YKCHCCDMDFKHKSALKKHLTSLH). Positions 403–424 (SLHGRSSGEKLPRHDLERQNLL) are disordered. Residues 408 to 424 (SSGEKLPRHDLERQNLL) show a composition bias toward basic and acidic residues.

The protein localises to the nucleus. Functionally, may be involved in transcriptional regulation. The polypeptide is Zinc finger and BTB domain-containing protein 6 (ZBTB6) (Bos taurus (Bovine)).